Reading from the N-terminus, the 366-residue chain is 2-aminoethylphosphonate--pyruvate transaminase (366 aa).

The residue at position 192 (Lys192) is an N6-(pyridoxal phosphate)lysine.

It belongs to the class-V pyridoxal-phosphate-dependent aminotransferase family. PhnW subfamily. As to quaternary structure, homodimer. Pyridoxal 5'-phosphate is required as a cofactor.

It catalyses the reaction (2-aminoethyl)phosphonate + pyruvate = phosphonoacetaldehyde + L-alanine. In terms of biological role, involved in phosphonate degradation. The protein is 2-aminoethylphosphonate--pyruvate transaminase (phnW) of Lysinibacillus sphaericus (strain C3-41).